The primary structure comprises 315 residues: Ribosomal RNA small subunit methyltransferase H (315 aa).

Residues 34-36 (GGH), Asp-53, Asp-100, and His-107 each bind S-adenosyl-L-methionine.

The protein belongs to the methyltransferase superfamily. RsmH family.

The protein resides in the cytoplasm. It catalyses the reaction cytidine(1402) in 16S rRNA + S-adenosyl-L-methionine = N(4)-methylcytidine(1402) in 16S rRNA + S-adenosyl-L-homocysteine + H(+). Its function is as follows. Specifically methylates the N4 position of cytidine in position 1402 (C1402) of 16S rRNA. This is Ribosomal RNA small subunit methyltransferase H from Treponema denticola (strain ATCC 35405 / DSM 14222 / CIP 103919 / JCM 8153 / KCTC 15104).